The primary structure comprises 236 residues: 2-C-methyl-D-erythritol 4-phosphate cytidylyltransferase (236 aa).

The protein belongs to the IspD/TarI cytidylyltransferase family. IspD subfamily.

The enzyme catalyses 2-C-methyl-D-erythritol 4-phosphate + CTP + H(+) = 4-CDP-2-C-methyl-D-erythritol + diphosphate. It functions in the pathway isoprenoid biosynthesis; isopentenyl diphosphate biosynthesis via DXP pathway; isopentenyl diphosphate from 1-deoxy-D-xylulose 5-phosphate: step 2/6. In terms of biological role, catalyzes the formation of 4-diphosphocytidyl-2-C-methyl-D-erythritol from CTP and 2-C-methyl-D-erythritol 4-phosphate (MEP). This chain is 2-C-methyl-D-erythritol 4-phosphate cytidylyltransferase, found in Symbiobacterium thermophilum (strain DSM 24528 / JCM 14929 / IAM 14863 / T).